An 89-amino-acid polypeptide reads, in one-letter code: Small ribosomal subunit protein bS20 (89 aa).

Belongs to the bacterial ribosomal protein bS20 family.

Binds directly to 16S ribosomal RNA. The chain is Small ribosomal subunit protein bS20 from Solidesulfovibrio magneticus (strain ATCC 700980 / DSM 13731 / RS-1) (Desulfovibrio magneticus).